A 302-amino-acid polypeptide reads, in one-letter code: Sulfate adenylyltransferase subunit 2 (302 aa).

The protein belongs to the PAPS reductase family. CysD subfamily. In terms of assembly, heterodimer composed of CysD, the smaller subunit, and CysN.

It catalyses the reaction sulfate + ATP + H(+) = adenosine 5'-phosphosulfate + diphosphate. It participates in sulfur metabolism; hydrogen sulfide biosynthesis; sulfite from sulfate: step 1/3. Its function is as follows. With CysN forms the ATP sulfurylase (ATPS) that catalyzes the adenylation of sulfate producing adenosine 5'-phosphosulfate (APS) and diphosphate, the first enzymatic step in sulfur assimilation pathway. APS synthesis involves the formation of a high-energy phosphoric-sulfuric acid anhydride bond driven by GTP hydrolysis by CysN coupled to ATP hydrolysis by CysD. This chain is Sulfate adenylyltransferase subunit 2, found in Parabacteroides distasonis (strain ATCC 8503 / DSM 20701 / CIP 104284 / JCM 5825 / NCTC 11152).